A 147-amino-acid chain; its full sequence is UPF0306 protein YhbP (147 aa).

Belongs to the UPF0306 family.

The polypeptide is UPF0306 protein YhbP (Salmonella arizonae (strain ATCC BAA-731 / CDC346-86 / RSK2980)).